Consider the following 350-residue polypeptide: Transmembrane protein 185B (350 aa).

The next 7 membrane-spanning stretches (helical) occupy residues 16-36 (LIYA…DGII), 41-61 (WAVF…ASVG), 81-101 (FKAM…EILV), 111-131 (FWLL…AACV), 168-188 (WLVV…VVLY), 211-231 (VTMA…EVLL), and 240-260 (TFSY…LMAT).

The protein belongs to the TMEM185 family.

Its subcellular location is the membrane. This chain is Transmembrane protein 185B (Tmem185b), found in Mus musculus (Mouse).